The sequence spans 135 residues: Galectin-1 (135 aa).

Residue Ala-2 is modified to N-acetylalanine. In terms of domain architecture, Galectin spans 4 to 135; sequence GLVASNLNLK…DFKIKCVAFD (132 aa). 2 positions are modified to N6-acetyllysine: Lys-13 and Lys-29. Residue Ser-30 is modified to Phosphoserine. A beta-D-galactoside-binding positions include 45–49, His-53, Asn-62, and 69–72; these read HFNPR and WGTE. An N6-acetyllysine; alternate modification is found at Lys-108. The residue at position 108 (Lys-108) is an N6-succinyllysine; alternate. An N6-acetyllysine modification is found at Lys-128.

As to quaternary structure, homodimer. Binds LGALS3BP. Interacts with CD2, CD3, CD4, CD6, CD7, CD43, ALCAM and CD45. Interacts with laminin (via poly-N-acetyllactosamine). Interacts with SUSD2.

The protein localises to the secreted. Its subcellular location is the extracellular space. It is found in the extracellular matrix. Lectin that binds beta-galactoside and a wide array of complex carbohydrates. Plays a role in regulating apoptosis, cell proliferation and cell differentiation. Inhibits CD45 protein phosphatase activity and therefore the dephosphorylation of Lyn kinase. Strong inducer of T-cell apoptosis. The protein is Galectin-1 (LGALS1) of Pongo abelii (Sumatran orangutan).